We begin with the raw amino-acid sequence, 588 residues long: Arginine--tRNA ligase (588 aa).

The 'HIGH' region signature appears at 126–136; sequence PNIAKEMHVGH.

This sequence belongs to the class-I aminoacyl-tRNA synthetase family. As to quaternary structure, monomer.

The protein resides in the cytoplasm. The catalysed reaction is tRNA(Arg) + L-arginine + ATP = L-arginyl-tRNA(Arg) + AMP + diphosphate. The chain is Arginine--tRNA ligase from Nostoc sp. (strain PCC 7120 / SAG 25.82 / UTEX 2576).